The following is a 746-amino-acid chain: NAD(P)H-quinone oxidoreductase subunit 5, chloroplastic (746 aa).

16 consecutive transmembrane segments (helical) span residues 9–29 (WIIP…LLLF), 40–60 (WAFP…DLSI), 89–109 (IDSL…LVLI), 121–140 (YLRF…GLVT), 147–167 (VYIF…FWFT), 185–205 (GDFG…SLEF), 219–239 (NEVN…GSVA), 258–278 (TPIS…FLVA), 280–300 (LLPL…IGII), 327–347 (LGYM…FHLI), 354–374 (ALLF…VGYS), 396–416 (MSFL…CFWS), 425–445 (WLYS…TAFY), 552–572 (LFSM…GISF), 606–626 (FFIN…IASF), and 726–746 (SYIF…YLFP).

The protein belongs to the complex I subunit 5 family. As to quaternary structure, NDH is composed of at least 16 different subunits, 5 of which are encoded in the nucleus.

Its subcellular location is the plastid. The protein localises to the chloroplast thylakoid membrane. The catalysed reaction is a plastoquinone + NADH + (n+1) H(+)(in) = a plastoquinol + NAD(+) + n H(+)(out). The enzyme catalyses a plastoquinone + NADPH + (n+1) H(+)(in) = a plastoquinol + NADP(+) + n H(+)(out). NDH shuttles electrons from NAD(P)H:plastoquinone, via FMN and iron-sulfur (Fe-S) centers, to quinones in the photosynthetic chain and possibly in a chloroplast respiratory chain. The immediate electron acceptor for the enzyme in this species is believed to be plastoquinone. Couples the redox reaction to proton translocation, and thus conserves the redox energy in a proton gradient. The protein is NAD(P)H-quinone oxidoreductase subunit 5, chloroplastic (ndhF) of Vicia faba (Broad bean).